We begin with the raw amino-acid sequence, 114 residues long: Ribonuclease P protein component (114 aa).

Belongs to the RnpA family. In terms of assembly, consists of a catalytic RNA component (M1 or rnpB) and a protein subunit.

The enzyme catalyses Endonucleolytic cleavage of RNA, removing 5'-extranucleotides from tRNA precursor.. In terms of biological role, RNaseP catalyzes the removal of the 5'-leader sequence from pre-tRNA to produce the mature 5'-terminus. It can also cleave other RNA substrates such as 4.5S RNA. The protein component plays an auxiliary but essential role in vivo by binding to the 5'-leader sequence and broadening the substrate specificity of the ribozyme. The protein is Ribonuclease P protein component of Buchnera aphidicola subsp. Schizaphis graminum (strain Sg).